We begin with the raw amino-acid sequence, 431 residues long: Sorting nexin-31 (431 aa).

One can recognise a PX domain in the interval Met-1–Thr-107.

The protein belongs to the sorting nexin family.

Functionally, may be involved in protein trafficking. The polypeptide is Sorting nexin-31 (snx31) (Xenopus laevis (African clawed frog)).